The primary structure comprises 687 residues: Ferric vulnibactin receptor VuuA (687 aa).

An N-terminal signal peptide occupies residues 1 to 37 (MAALRPARTSVAEKKTFKLHALSAVVMGLCASGQAYA). The region spanning 63 to 185 (TIYDTSSSVQ…SAGAIVMKTN (123 aa)) is the TBDR plug domain. Residues 190 to 687 (HFESAVKAGV…MIGASLQLNF (498 aa)) enclose the TBDR beta-barrel domain. A TonB C-terminal box motif is present at residues 670–687 (EPLKQQPRMIGASLQLNF).

Belongs to the TonB-dependent receptor family.

The protein localises to the cell outer membrane. Functionally, involved in the uptake of iron in complex with vulnibactin, a catecholate siderophore synthesized by V.vulnificus. Binds and transports ferric vulnibactin across the outer membrane. The energy source is provided by the inner membrane TonB system. The chain is Ferric vulnibactin receptor VuuA from Vibrio vulnificus.